Here is a 113-residue protein sequence, read N- to C-terminus: Iron-sulfur cluster insertion protein ErpA (113 aa).

Iron-sulfur cluster-binding residues include C41, C105, and C107.

Belongs to the HesB/IscA family. Homodimer. The cofactor is iron-sulfur cluster.

Required for insertion of 4Fe-4S clusters for at least IspG. In Actinobacillus succinogenes (strain ATCC 55618 / DSM 22257 / CCUG 43843 / 130Z), this protein is Iron-sulfur cluster insertion protein ErpA.